A 349-amino-acid polypeptide reads, in one-letter code: UDP-galactose/UDP-glucose transporter 4 (349 aa).

A run of 8 helical transmembrane segments spans residues 23–43 (WQQF…NGIC), 56–76 (GWYF…MYGF), 115–135 (IMFK…IPGL), 140–160 (PVHE…FTLA), 167–187 (NFSI…AFLG), 205–225 (MLFC…ILTG), 248–268 (AMAT…FGAA), and 293–313 (LTEQ…LKMV). The tract at residues 316-349 (PNPNPKSSGSGQTPGKLERVKFEKEDDEESRPLV) is disordered. Residues 340 to 349 (EDDEESRPLV) are compositionally biased toward acidic residues.

Belongs to the nucleotide-sugar transporter family. UDP-galactose:UMP antiporter (TC 2.A.7.11) subfamily.

The protein localises to the membrane. Its function is as follows. Sugar transporter involved in the transport of nucleotide-sugars from cytoplasm into the Golgi and/or the endoplasmic reticulum. The polypeptide is UDP-galactose/UDP-glucose transporter 4 (Arabidopsis thaliana (Mouse-ear cress)).